The following is a 435-amino-acid chain: Phospholipase A1 EG1, chloroplastic/mitochondrial (435 aa).

The N-terminal 31 residues, 1-31 (MTLPRQCAAACRTGGGGGGVVRCRAVAAAGG), are a transit peptide targeting the chloroplast and mitochondrion. The GXSXG motif lies at 264-268 (GHSMG). Serine 266 functions as the Acyl-ester intermediate in the catalytic mechanism. Catalysis depends on charge relay system residues aspartate 324 and histidine 371.

Belongs to the AB hydrolase superfamily. Lipase family.

Its subcellular location is the mitochondrion. It localises to the plastid. The protein resides in the chloroplast. The enzyme catalyses a 1,2-diacyl-sn-glycero-3-phosphocholine + H2O = a 2-acyl-sn-glycero-3-phosphocholine + a fatty acid + H(+). In terms of biological role, phospholipase that releases free fatty acids from phospholipids. Catalyzes the initial step of jasmonate (JA) biosynthesis. Required for the biosynthesis of endogenous JA in seedling, inflorescence and spikelets. Not essential for JA biosynthesis after wounding. Mediates spikelet development and specification of empty-glume identity. Functions in a high temperature-dependent manner to maintain floral developmental robustness under heat stress conditions. Functions by safeguarding the expression of several floral identity genes, such as MADS1, MADS6 and G1. The chain is Phospholipase A1 EG1, chloroplastic/mitochondrial from Oryza sativa subsp. indica (Rice).